The following is a 300-amino-acid chain: MILEGGGVMNLNPGNNLLHQPPAWTDSYSTCNVSSGFFGGQWHEIHPQYWTKYQVWEWLQHLLDTNQLDASCIPFQEFDINGEHLCSMSLQEFTRAAGTAGQLLYSNLQHLKWNGQCSSDLFQSTHNVIVKTEQTEPSIVNTWKDENYLYDTNYGSTVDLLDSKTFCRAQISMTTTSHLPVAESPDMKKEQDPPAKCHTKKHNPRGTHLWEFIRDILLNPDKNPGLIKWEDRSEGVFRFLKSEAVAQLWGKKKNNSSMTYEKLSRAMRYYYKREILERVDGRRLVYKFGKNARGWRENEN.

The PNT domain occupies 29–115 (STCNVSSGFF…SNLQHLKWNG (87 aa)). A disordered region spans residues 183-202 (ESPDMKKEQDPPAKCHTKKH). The segment covering 185–195 (PDMKKEQDPPA) has biased composition (basic and acidic residues). Residues 207–289 (THLWEFIRDI…DGRRLVYKFG (83 aa)) constitute a DNA-binding region (ETS).

It belongs to the ETS family.

It localises to the nucleus. Functionally, transcriptional activator that may play a role in regulating epithelial cell differentiation and proliferation. May act as a repressor for a specific subset of ETS/AP-1-responsive genes, and as a modulator of the nuclear response to mitogen-activated protein kinase signaling cascades. Binds to DNA sequences containing the consensus nucleotide core sequence GGAA. Involved in regulation of TNFRSF10B/DR5 expression through Ets-binding sequences on the TNFRSF10B/DR5 promoter. This chain is ETS homologous factor (EHF), found in Pan troglodytes (Chimpanzee).